The chain runs to 521 residues: Occludin (521 aa).

At 1 to 66 (MSSRPFESPP…KWTSPPGVIR (66 aa)) the chain is on the cytoplasmic side. In terms of domain architecture, MARVEL spans 60–268 (SPPGVIRILS…IIFFAVKTRR (209 aa)). The helical transmembrane segment at 67–89 (ILSMLVIVMCIAIFGCVASTLAW) threads the bilayer. At 90-134 (DRGYGTGLMGGSIGYPYGSGFGSYGTGYGYGFGYGYGYGGYTDPR) the chain is on the extracellular side. Residues 135 to 159 (AAKGFLLAMVAFCFIAALVIFVTSV) form a helical membrane-spanning segment. Over 160–169 (IRSDISRTRR) the chain is Cytoplasmic. A helical transmembrane segment spans residues 170 to 194 (YYLTVIILSAFLGVMMFIATIVYIM). The Extracellular portion of the chain corresponds to 195–242 (GVNPTAQASGSLYSSQIYAMCNQFYASTATGLYMDQYLYHYCVVDPQE). A disulfide bridge connects residues Cys-215 and Cys-236. The chain crosses the membrane as a helical span at residues 243-264 (AIAIVLGFMVIVAFALIIFFAV). Over 265-521 (KTRRKMDRYD…MVGDYDRQKT (257 aa)) the chain is Cytoplasmic. Ser-301 bears the Phosphoserine mark. The segment at 301 to 407 (SAGTQDMPPP…ETDYTTGGES (107 aa)) is disordered. Thr-304 bears the Phosphothreonine mark. Phosphoserine occurs at positions 312, 320, and 339. Position 367 is a phosphotyrosine (Tyr-367). A phosphoserine mark is found at Ser-368 and Ser-369. Positions 380 to 389 (APSKGRTGRP) are enriched in basic residues. The span at 390 to 399 (KRLEQDHYET) shows a compositional bias: basic and acidic residues. 2 positions are modified to phosphotyrosine: Tyr-397 and Tyr-401. Residues Thr-402 and Thr-403 each carry the phosphothreonine; by PKC/PRKCH modification. Ser-407 is subject to Phosphoserine. The region spanning 413–521 (EDWIREYPPI…MVGDYDRQKT (109 aa)) is the OCEL domain. A coiled-coil region spans residues 424 to 488 (SDQQRQLYKR…EYNRLKQVKG (65 aa)). Ser-489 bears the Phosphoserine mark.

It belongs to the ELL/occludin family. As to quaternary structure, interacts with TJP1/ZO1. Interacts with VAPA. Interacts with CLDN1, CLDN6, CLDN9, CLDN11, CLDN12 and CLDN17. Interacts with PLSCR1. Interacts with LSR, ILDR1 and ILDR2. Interacts with TJP2/ZO2. Dephosphorylated by PTPRJ. Less-phosphorylated forms are found in basolateral membrane, cytosol and tight junction. More-heavily phosphorylated forms are concentrated exclusively in tight junction. In terms of tissue distribution, localized at tight junctions of both epithelial and endothelial cells.

It is found in the cell membrane. Its subcellular location is the cell junction. The protein resides in the tight junction. In terms of biological role, may play a role in the formation and regulation of the tight junction (TJ) paracellular permeability barrier. Interacts with ZO-1. In Canis lupus familiaris (Dog), this protein is Occludin (OCLN).